The following is a 430-amino-acid chain: Elongation factor 1-alpha (430 aa).

Residues 7–219 (KPHVNIVFIG…DQIPEPEKPV (213 aa)) enclose the tr-type G domain. Positions 16-23 (GHVDHGKS) are G1. A GTP-binding site is contributed by 16–23 (GHVDHGKS). S23 serves as a coordination point for Mg(2+). The tract at residues 70–74 (GITID) is G2. The G3 stretch occupies residues 91 to 94 (DAPG). Residues 91-95 (DAPGH) and 146-149 (NKMD) each bind GTP. A G4 region spans residues 146-149 (NKMD). Residues 183–185 (SAW) are G5.

It belongs to the TRAFAC class translation factor GTPase superfamily. Classic translation factor GTPase family. EF-Tu/EF-1A subfamily.

The protein resides in the cytoplasm. It catalyses the reaction GTP + H2O = GDP + phosphate + H(+). GTP hydrolase that promotes the GTP-dependent binding of aminoacyl-tRNA to the A-site of ribosomes during protein biosynthesis. The sequence is that of Elongation factor 1-alpha from Pyrococcus woesei.